Reading from the N-terminus, the 86-residue chain is Omega-theraphotoxin-Hhn1a 1 (86 aa).

Residues 1-21 form the signal peptide; that stretch reads MKSIVFVALFGLALLAVVCSA. Positions 22–50 are excised as a propeptide; that stretch reads SEDAHKELLKEVVRAMVVDKTDAVQAEER. 3 cysteine pairs are disulfide-bonded: C52-C66, C59-C71, and C65-C78.

Belongs to the neurotoxin 10 (Hwtx-1) family. 17 (Hntx-9) subfamily. Expressed by the venom gland.

Its subcellular location is the secreted. In terms of biological role, ion channel inhibitor. The chain is Omega-theraphotoxin-Hhn1a 1 from Cyriopagopus hainanus (Chinese bird spider).